A 332-amino-acid chain; its full sequence is Ribosomal RNA small subunit methyltransferase H (332 aa).

Residues 36-38 (GGH), aspartate 61, phenylalanine 88, aspartate 114, and glutamine 121 each bind S-adenosyl-L-methionine.

Belongs to the methyltransferase superfamily. RsmH family.

Its subcellular location is the cytoplasm. It catalyses the reaction cytidine(1402) in 16S rRNA + S-adenosyl-L-methionine = N(4)-methylcytidine(1402) in 16S rRNA + S-adenosyl-L-homocysteine + H(+). In terms of biological role, specifically methylates the N4 position of cytidine in position 1402 (C1402) of 16S rRNA. This Pelodictyon phaeoclathratiforme (strain DSM 5477 / BU-1) protein is Ribosomal RNA small subunit methyltransferase H.